Here is a 138-residue protein sequence, read N- to C-terminus: MRTLWIMAVLLVGVEGGVIELTKMFVQEMGKNALTSYSLYGCNCGPGGRRKPMDATDSCCHVHKCCYKKLTDCDPIKDRYSYSWVNKAIVCGEDNPCLKEMCECDKAVAIRFRENLDTYDKKKKINLKLFCKKTSEQC.

Positions 1 to 16 are cleaved as a signal peptide; sequence MRTLWIMAVLLVGVEG. 6 disulfides stabilise this stretch: Cys-42–Cys-131, Cys-44–Cys-60, Cys-65–Cys-138, Cys-66–Cys-104, Cys-73–Cys-97, and Cys-91–Cys-102. The tract at residues 121 to 133 is important for membrane-damaging activities in eukaryotes and bacteria; heparin-binding; sequence KKKKINLKLFCKK.

As to expression, expressed by the venom gland.

It localises to the secreted. Its function is as follows. Snake venom phospholipase A2 homolog that lacks catalytic activity. It shows myotoxic and weak anticoagulant activities. A model of myotoxic mechanism has been proposed: an apo Lys49-PLA2 is activated by the entrance of a hydrophobic molecule (e.g. fatty acid) at the hydrophobic channel of the protein leading to a reorientation of a monomer. This reorientation causes a transition between 'inactive' to 'active' states, causing alignment of C-terminal and membrane-docking sites (MDoS) side-by-side and putting the membrane-disruption sites (MDiS) in the same plane, exposed to solvent and in a symmetric position for both monomers. The MDoS region stabilizes the toxin on membrane by the interaction of charged residues with phospholipid head groups. Subsequently, the MDiS region destabilizes the membrane with penetration of hydrophobic residues. This insertion causes a disorganization of the membrane, allowing an uncontrolled influx of ions (i.e. calcium and sodium), and eventually triggering irreversible intracellular alterations and cell death. The protein is Basic phospholipase A2 homolog Ts-K49b of Trimeresurus stejnegeri (Chinese green tree viper).